The chain runs to 590 residues: Probable lysine-specific demethylase 4B (590 aa).

In terms of domain architecture, JmjN spans 9 to 51 (IKVFRPTWEEFKDFPKYVAYMESQGAHKAGLAKVVPPPEWVPR). Y130 contributes to the 2-oxoglutarate binding site. A JmjC domain is found at 140–306 (DTDQDSWNIN…YGKRAVQCTC (167 aa)). Residues H186 and E188 each coordinate Fe cation. Positions 196 and 204 each coordinate 2-oxoglutarate. Zn(2+) contacts are provided by C232 and H238. K239 is a binding site for 2-oxoglutarate. H274 serves as a coordination point for Fe cation. Residues C304 and C306 each contribute to the Zn(2+) site. 2 disordered regions span residues 372-395 (PTKAKSFKERNPDLDLDEIQQNPN) and 417-590 (ATDE…TASP). Residues 445–458 (EYIDDGTEDDDEEE) are compositionally biased toward acidic residues. The span at 480–494 (SKRKTNSRNNRGRSP) shows a compositional bias: basic residues. 2 stretches are compositionally biased toward low complexity: residues 502 to 513 (ISPASSTSSTSR) and 537 to 571 (TTSPAVSSAATAVKTPTSAVVAGTTSIATTTTPPA).

This sequence belongs to the JHDM3 histone demethylase family. Requires Fe(2+) as cofactor.

The protein resides in the nucleus. The enzyme catalyses N(6),N(6),N(6)-trimethyl-L-lysyl(9)-[histone H3] + 2 2-oxoglutarate + 2 O2 = N(6)-methyl-L-lysyl(9)-[histone H3] + 2 formaldehyde + 2 succinate + 2 CO2. Functionally, probable histone demethylase that specifically demethylates 'Lys-9' and 'Lys-36' residues of histone H3, thereby playing a central role in histone code. Demethylation of Lys residue generates formaldehyde and succinate. In Drosophila melanogaster (Fruit fly), this protein is Probable lysine-specific demethylase 4B (Kdm4B).